A 578-amino-acid polypeptide reads, in one-letter code: Cholesterol oxidase (578 aa).

The FAD site is built by Gly-15, Glu-34, Gly-85, Ala-90, and Val-230. The active-site Proton acceptor is the His-470. Gly-503 contributes to the FAD binding site. The tract at residues 529-551 (WPNKGETDRRPPQGEPYRRLAPI) is disordered. Residues 533–546 (GETDRRPPQGEPYR) show a composition bias toward basic and acidic residues.

Belongs to the GMC oxidoreductase family. The cofactor is FAD.

The protein localises to the secreted. It carries out the reaction cholesterol + O2 = cholest-5-en-3-one + H2O2. It catalyses the reaction cholest-5-en-3-one = cholest-4-en-3-one. Its pathway is steroid metabolism; cholesterol degradation. Its function is as follows. Bifunctional enzyme that catalyzes the oxidation and isomerization of cholesterol to cholestenone (cholest-4-en-3-one), an initial step in the cholesterol degradation process. Contributes to virulence. The sequence is that of Cholesterol oxidase (choD) from Mycobacterium tuberculosis (strain CDC 1551 / Oshkosh).